We begin with the raw amino-acid sequence, 403 residues long: MDRLTVRDLSPEEKKVLVRVDFNVPIKDGKILDDIRIRSAMPTINYLLQKRAAVILMSHLGRPRGSGFEEKYSLQPVVEVLEGYLGHHVPLAPDCIGEVARQAVAQLSPGRVLILENLRFHRGEEHPEEDPAFAAELSSYGDFYVNDAFGTSHRKHTSVYTVPQAFPGRCAAGLLMEKELEFLGTHLLISPKRPFTAILGGAKVSSKIGVIEALLSQVDNLLLAGGMGYTFLKALGKSVGNSLVEESGIELATRVLQIAKQRNVRIVLPVDAKVAKTCDSGVSWSEVSINQGIPADLEGLDIGTQTIQEFCKIIDASATVFWNGPVGVYEVPPFDQGSMAIANCLARHPSATTVVGGGDAAAVIALAGCSSQVSHVSTGGGASLEFLEKGFLPGTEVLSPTRG.

Residues 21–23 (DFN), arginine 36, 59–62 (HLGR), arginine 119, and arginine 154 contribute to the substrate site. Residues lysine 207, glycine 299, glutamate 330, and 357 to 360 (GGDA) each bind ATP.

This sequence belongs to the phosphoglycerate kinase family. Monomer.

It is found in the cytoplasm. It catalyses the reaction (2R)-3-phosphoglycerate + ATP = (2R)-3-phospho-glyceroyl phosphate + ADP. Its pathway is carbohydrate degradation; glycolysis; pyruvate from D-glyceraldehyde 3-phosphate: step 2/5. The sequence is that of Phosphoglycerate kinase from Chlamydia felis (strain Fe/C-56) (Chlamydophila felis).